The following is a 375-amino-acid chain: Histidine biosynthesis bifunctional protein HisB (375 aa).

Residues 1-168 (MTPILFVDRD…GIAHELADAP (168 aa)) are histidinol-phosphatase. The active-site Nucleophile is the Asp8. Mg(2+) contacts are provided by Asp8, Asp10, and Asp128. Asp10 (proton donor) is an active-site residue. Residues 169–375 (RRALVQRNTK…TALPTTKGTL (207 aa)) form an imidazoleglycerol-phosphate dehydratase region.

In the N-terminal section; belongs to the histidinol-phosphatase family. It in the C-terminal section; belongs to the imidazoleglycerol-phosphate dehydratase family. Mg(2+) serves as cofactor.

Its subcellular location is the cytoplasm. It carries out the reaction D-erythro-1-(imidazol-4-yl)glycerol 3-phosphate = 3-(imidazol-4-yl)-2-oxopropyl phosphate + H2O. The catalysed reaction is L-histidinol phosphate + H2O = L-histidinol + phosphate. It participates in amino-acid biosynthesis; L-histidine biosynthesis; L-histidine from 5-phospho-alpha-D-ribose 1-diphosphate: step 6/9. Its pathway is amino-acid biosynthesis; L-histidine biosynthesis; L-histidine from 5-phospho-alpha-D-ribose 1-diphosphate: step 8/9. This Xanthomonas axonopodis pv. citri (strain 306) protein is Histidine biosynthesis bifunctional protein HisB.